A 506-amino-acid chain; its full sequence is Maturase K (506 aa).

The protein belongs to the intron maturase 2 family. MatK subfamily.

It localises to the plastid. The protein localises to the chloroplast. Functionally, usually encoded in the trnK tRNA gene intron. Probably assists in splicing its own and other chloroplast group II introns. This Prunus dulcis (Almond) protein is Maturase K.